A 385-amino-acid chain; its full sequence is uncharacterized protein (385 aa).

The protein belongs to the phage portal family. HK97 subfamily.

This is an uncharacterized protein from Rickettsia felis (strain ATCC VR-1525 / URRWXCal2) (Rickettsia azadi).